The chain runs to 188 residues: Scytalone dehydratase (188 aa).

The substrate site is built by tyrosine 27, tyrosine 47, and phenylalanine 50. Residues histidine 82 and histidine 107 contribute to the active site. Asparagine 128 is a substrate binding site.

The protein belongs to the scytalone dehydratase family. Homotrimer. Each subunit contains an active site, located in the central part of the hydrophobic core of the monomer, which functions independently.

Its subcellular location is the endosome. The enzyme catalyses scytalone = 1,3,8-trihydroxynaphthalene + H2O. It functions in the pathway pigment biosynthesis; melanin biosynthesis. Its activity is regulated as follows. Carpropamid acts as an efficient inhibitor of scytalone dehydratase activity. Functionally, scytalone dehydratase; part of the gene cluster that mediates the biosynthesis of dihydroxynaphthalene (DHN)-melanin, a bluish-green pigment and a structural component of the conidial wall. Within the pathway, catalyzes the dehydration of scytalone as well as of vermelone. This chain is Scytalone dehydratase, found in Colletotrichum orbiculare (strain 104-T / ATCC 96160 / CBS 514.97 / LARS 414 / MAFF 240422) (Cucumber anthracnose fungus).